The primary structure comprises 120 residues: Peptidyl-tRNA hydrolase (120 aa).

It belongs to the PTH2 family.

It is found in the cytoplasm. The enzyme catalyses an N-acyl-L-alpha-aminoacyl-tRNA + H2O = an N-acyl-L-amino acid + a tRNA + H(+). In terms of biological role, the natural substrate for this enzyme may be peptidyl-tRNAs which drop off the ribosome during protein synthesis. This is Peptidyl-tRNA hydrolase from Sulfolobus acidocaldarius (strain ATCC 33909 / DSM 639 / JCM 8929 / NBRC 15157 / NCIMB 11770).